We begin with the raw amino-acid sequence, 523 residues long: Sialate O-acetylesterase (523 aa).

Positions 1–23 are cleaved as a signal peptide; it reads MVAPGLVLGLVLPLILWADRSAG. N-linked (GlcNAc...) asparagine glycosylation is found at N107, N138, N267, N290, N401, and N422.

The protein localises to the lysosome. The enzyme catalyses N-acetyl-9-O-acetylneuraminate + H2O = N-acetylneuraminate + acetate + H(+). It carries out the reaction an Ac-O-9-sialoglycoconjugate + H2O = a sialoglycoconjugate + acetate + H(+). In terms of biological role, catalyzes the removal of O-acetyl ester groups from position 9 of the free diacetylated sialate N-acetyl-9-O-acetylneuraminate (Neu5,9Ac2) in the cytosol and of the diacetylated sialate residues of sialylglycoconjugates in the lysosomes. Together with the sialate-O-acetyltransferase they regulate the balance of acetylated sialoglycoconjugates, key players in various processes such as cell-cell interactions, host-pathogen recognition, and tumor antigenicity. The polypeptide is Sialate O-acetylesterase (SIAE) (Pongo abelii (Sumatran orangutan)).